We begin with the raw amino-acid sequence, 317 residues long: Multivesicular body subunit 12B (317 aa).

A disordered region spans residues 1–49 (MRSCFCVRRSRDPPPPQPPPPQRGTDQATMPEVKELSEALPETPMDPIT). The segment covering 13–22 (PPPPQPPPPQ) has biased composition (pro residues). An MABP domain is found at 45 to 191 (MDPITGVGVV…SMGIWYRMGR (147 aa)). Position 99 is a phosphoserine (Ser99). A phosphothreonine mark is found at Thr120, Thr202, and Thr203. Residues 193-218 (PRNHDSSQPTTPSQSSASSTPAPNLP) form a disordered region. Low complexity predominate over residues 198-214 (SSQPTTPSQSSASSTPA). Ser222 is subject to Phosphoserine. The 50-residue stretch at 252–301 (MDGVPFMISEKFSCIPESMQPFDLLGITIKSLAEIEKEYEYSFRTEQSAA) folds into the UMA domain. The tract at residues 297 to 317 (EQSAAARLPPSPTRCQQIPQS) is disordered. Phosphoserine is present on Ser307.

The protein belongs to the MVB12 family. In terms of assembly, component of the ESCRT-I complex (endosomal sorting complex required for transport I) which consists of TSG101, VPS28, a VPS37 protein (VPS37A to -D) and MVB12A or MVB12B in a 1:1:1:1 stoichiometry. Interacts with TSG101; the association appears to be mediated by the TSG101-VPS37 binary subcomplex. Interacts with VPS28. Interacts with VPS37B; the association appears to be mediated by the TSG101-VPS37 binary subcomplex. Interacts with VPS37C; the association appears to be mediated by the TSG101-VPS37 binary subcomplex.

It localises to the endosome. It is found in the late endosome membrane. Its function is as follows. Component of the ESCRT-I complex, a regulator of vesicular trafficking process. Required for the sorting of endocytic ubiquitinated cargos into multivesicular bodies. The sequence is that of Multivesicular body subunit 12B (Mvb12b) from Mus musculus (Mouse).